The following is a 424-amino-acid chain: Histidine--tRNA ligase (424 aa).

It belongs to the class-II aminoacyl-tRNA synthetase family. Homodimer.

The protein resides in the cytoplasm. The catalysed reaction is tRNA(His) + L-histidine + ATP = L-histidyl-tRNA(His) + AMP + diphosphate + H(+). The chain is Histidine--tRNA ligase from Salmonella dublin (strain CT_02021853).